The primary structure comprises 1182 residues: Rho guanine nucleotide exchange factor osg-1 (1182 aa).

The span at 1–12 shows a compositional bias: acidic residues; sequence MLNPNDADDSDS. Residues 1 to 96 form a disordered region; sequence MLNPNDADDS…TNSEPNVDMP (96 aa). Positions 29–41 are enriched in polar residues; sequence ATVSPSTRNSFYN. The segment covering 69-78 has biased composition (basic and acidic residues); that stretch reads ASRERSESRR. One can recognise a DH domain in the interval 357–544; the sequence is VRHLAARELL…HCLAVAINQH (188 aa). Residues 637–669 are a coiled coil; sequence EDVQISKDTLSQLEEVERKLESSREDDRVLKKM. The interval 863 to 884 is disordered; sequence INSSGSDTESSSDEGTSTAGQT. Residues 865-879 are compositionally biased toward low complexity; it reads SSGSDTESSSDEGTS. A coiled-coil region spans residues 897–922; sequence VVNSTERVRSRARDRLARLRNSITSI.

In terms of tissue distribution, expressed in muscles in the body wall and head, and in the nervous system in neurons including FLP and ASE neurons in the head.

Its function is as follows. Probable guanine nucleotide exchange factor which regulates the Rho GTPase rho-1. Functions in ASE sensory neurons where it promotes neuronal degeneration under conditions of oxidative stress. This Caenorhabditis elegans protein is Rho guanine nucleotide exchange factor osg-1.